We begin with the raw amino-acid sequence, 429 residues long: Na(+)/H(+) antiporter NhaA 1 (429 aa).

The next 12 membrane-spanning stretches (helical) occupy residues 32–52 (ISGGLLLAATVLALGWANSPW), 73–93 (LSVQQWAADGLLAIFFFVAGL), 111–131 (VVPVAAAAGGVAVPAVLYSLL), 140–160 (GWAIPTATDIAFALSVLAVVG), 170–190 (FLLTLAVVDDLLAIVIIAVAY), 193–213 (ELSVVPLVAAVVPLAAFTLLV), 219–239 (AWWLLLPLAVLTWALVHASGV), 243–263 (VAGVLLAFAVPVLRSEGAGGP), 284–304 (VAVPVFAFCSAGVTVGGLGGL), 316–336 (VVVGLVVGKAIGIFTTTWLVA), 349–369 (WVDVAGLALLGGVGFTVSLLI), and 383–403 (HVKVGVLTASVTAALLATVVL).

This sequence belongs to the NhaA Na(+)/H(+) (TC 2.A.33) antiporter family.

The protein resides in the cell membrane. It catalyses the reaction Na(+)(in) + 2 H(+)(out) = Na(+)(out) + 2 H(+)(in). In terms of biological role, na(+)/H(+) antiporter that extrudes sodium in exchange for external protons. The protein is Na(+)/H(+) antiporter NhaA 1 of Frankia alni (strain DSM 45986 / CECT 9034 / ACN14a).